The primary structure comprises 158 residues: MTRLTHLDSTGAARMVDVSDKPSTTREALAEGQVVMAPETLALIQSGNAKKGDVLGVARIAGIMASKRTHELIPLCHPLMLSKVEVEVTPDEALPGLHVVARVKTAGQTGVEMEALTAVSVACLTIYDMAKAADRGMRIENIRLLEKSGGRSGDWRAA.

Residues 75 to 77 (LCH) and 113 to 114 (ME) contribute to the substrate site. The active site involves Asp128.

This sequence belongs to the MoaC family. As to quaternary structure, homohexamer; trimer of dimers.

It carries out the reaction (8S)-3',8-cyclo-7,8-dihydroguanosine 5'-triphosphate = cyclic pyranopterin phosphate + diphosphate. The protein operates within cofactor biosynthesis; molybdopterin biosynthesis. Catalyzes the conversion of (8S)-3',8-cyclo-7,8-dihydroguanosine 5'-triphosphate to cyclic pyranopterin monophosphate (cPMP). This chain is Cyclic pyranopterin monophosphate synthase, found in Azorhizobium caulinodans (strain ATCC 43989 / DSM 5975 / JCM 20966 / LMG 6465 / NBRC 14845 / NCIMB 13405 / ORS 571).